The primary structure comprises 327 residues: tRNA N6-adenosine threonylcarbamoyltransferase (327 aa).

Histidine 109 and histidine 113 together coordinate Fe cation. Substrate is bound by residues 132-136 (MVSGG), aspartate 165, glycine 178, aspartate 182, and asparagine 268. Aspartate 296 contributes to the Fe cation binding site.

The protein belongs to the KAE1 / TsaD family. Fe(2+) is required as a cofactor.

Its subcellular location is the cytoplasm. The catalysed reaction is L-threonylcarbamoyladenylate + adenosine(37) in tRNA = N(6)-L-threonylcarbamoyladenosine(37) in tRNA + AMP + H(+). Required for the formation of a threonylcarbamoyl group on adenosine at position 37 (t(6)A37) in tRNAs that read codons beginning with adenine. Is involved in the transfer of the threonylcarbamoyl moiety of threonylcarbamoyl-AMP (TC-AMP) to the N6 group of A37, together with TsaE and TsaB. TsaD likely plays a direct catalytic role in this reaction. The sequence is that of tRNA N6-adenosine threonylcarbamoyltransferase from Thermotoga neapolitana (strain ATCC 49049 / DSM 4359 / NBRC 107923 / NS-E).